A 114-amino-acid polypeptide reads, in one-letter code: Ig heavy chain V region (114 aa).

One can recognise an Ig-like domain in the interval 1 to 106 (EVQLQQSGAE…AVRVISRYFD (106 aa)).

The sequence is that of Ig heavy chain V region from Mus musculus (Mouse).